The sequence spans 30 residues: Chassatide C3 (30 aa).

The cyclopeptide (Gly-Asn) cross-link spans 1-30 (GIPCGESCVWIPCISSALGCSCKNKVCYRN). 3 disulfide bridges follow: Cys-4–Cys-20, Cys-8–Cys-22, and Cys-13–Cys-27.

This is a cyclic peptide. Expressed in fruit, pedicel, stem and root but not in leaf (at protein level).

In terms of biological role, probably participates in a plant defense mechanism. This is Chassatide C3 from Chassalia chartacea (Chassalia curviflora).